Consider the following 793-residue polypeptide: Facilitated trehalose transporter Tret1 (793 aa).

At 1–326 (MNRKVGPVLE…LEVYRPTTNP (326 aa)) the chain is on the cytoplasmic side. 2 disordered regions span residues 99–148 (EKAK…EHKS) and 213–235 (RHIS…FEPS). Positions 104–113 (KSSLKSSRVS) are enriched in low complexity. Residues 115–125 (DQEDDRFDEDE) show a composition bias toward acidic residues. Basic and acidic residues predominate over residues 213-223 (RHISFKFDKEP). The helical transmembrane segment at 327–347 (IYIWTQVLAALSVSLGSMVVG) threads the bilayer. The Extracellular portion of the chain corresponds to 348–376 (FSSAYTSPALVSMKDRNITSFEVTDQSGS). Asparagine 364 carries N-linked (GlcNAc...) asparagine glycosylation. Residues 377 to 397 (WVGGIMPLAGLAGGILGGPMI) traverse the membrane as a helical segment. Residues 398–411 (EYLGRKNTILATAT) lie on the Cytoplasmic side of the membrane. Residues 412 to 432 (PFIISWLLIGCATHVAMVLVG) form a helical membrane-spanning segment. At 433-434 (RA) the chain is on the extracellular side. Residues 435–455 (LSGLCVGIASLSLPVYLGETV) form a helical membrane-spanning segment. Over 456-460 (QPEVR) the chain is Cytoplasmic. The helical transmembrane segment at 461–481 (GTLGLLPTAFGNIGILLCFVA) threads the bilayer. At 482–488 (GKYLDWS) the chain is on the extracellular side. The helical transmembrane segment at 489 to 509 (GLAFLGAALPIPFLLLMFLIP) threads the bilayer. Topologically, residues 510-572 (ETPRWYVSRN…DLLNKANLKP (63 aa)) are cytoplasmic. A helical membrane pass occupies residues 573-593 (LLISLGLMFFQQLSGINAVIF). The Extracellular portion of the chain corresponds to 594 to 609 (YTVQIFQSAGSTIDEK). Residues 610–630 (LCTIIVGVVNFIATFIATVLI) traverse the membrane as a helical segment. The Cytoplasmic portion of the chain corresponds to 631–636 (DRLGRK). A helical membrane pass occupies residues 637 to 657 (ILLYISDVAMIITLMTLGTFF). Over 658–668 (YMKNNGDDVSE) the chain is Extracellular. Residues 669–689 (IGWLPLAAFVVFVVGFSLGFG) traverse the membrane as a helical segment. At 690–703 (PIPWLMMGEILPGK) the chain is on the cytoplasmic side. Residues 704–724 (IRGSAASVATAFNWSCTFVVT) form a helical membrane-spanning segment. The Extracellular portion of the chain corresponds to 725-737 (KTFADITASIGNH). The chain crosses the membrane as a helical span at residues 738–758 (GAFWMFGSICIVGLLFVIVYV). Over 759–793 (PETQGKSLEDIERKMMGRVRRMSSVANIKPLSFNM) the chain is Cytoplasmic.

Belongs to the major facilitator superfamily. Sugar transporter (TC 2.A.1.1) family. Trehalose transporter subfamily.

It localises to the cell membrane. Functionally, high-capacity facilitative transporter for trehalose. Does not transport maltose, sucrose or lactose. Mediates the bidirectional transfer of trehalose. Responsible for the transport of trehalose synthesized in the fat body and the incorporation of trehalose into other tissues that require a carbon source, thereby regulating trehalose levels in the hemolymph. The polypeptide is Facilitated trehalose transporter Tret1 (Anopheles gambiae (African malaria mosquito)).